The chain runs to 224 residues: Protein-L-isoaspartate O-methyltransferase (224 aa).

Ser-63 is an active-site residue.

Belongs to the methyltransferase superfamily. L-isoaspartyl/D-aspartyl protein methyltransferase family.

It localises to the cytoplasm. It carries out the reaction [protein]-L-isoaspartate + S-adenosyl-L-methionine = [protein]-L-isoaspartate alpha-methyl ester + S-adenosyl-L-homocysteine. Its function is as follows. Catalyzes the methyl esterification of L-isoaspartyl residues in peptides and proteins that result from spontaneous decomposition of normal L-aspartyl and L-asparaginyl residues. It plays a role in the repair and/or degradation of damaged proteins. The chain is Protein-L-isoaspartate O-methyltransferase from Herpetosiphon aurantiacus (strain ATCC 23779 / DSM 785 / 114-95).